A 210-amino-acid chain; its full sequence is Large ribosomal subunit protein uL4 (210 aa).

The segment covering 44–54 (QRQGTASTLTR) has biased composition (polar residues). Residues 44 to 96 (QRQGTASTLTRSEVRGGGRKPYKQKGTGRARQGSIRTPLRPGGGVIFGPKPRS) form a disordered region. Residues 60–71 (GGRKPYKQKGTG) show a composition bias toward basic residues.

It belongs to the universal ribosomal protein uL4 family. As to quaternary structure, part of the 50S ribosomal subunit.

Functionally, one of the primary rRNA binding proteins, this protein initially binds near the 5'-end of the 23S rRNA. It is important during the early stages of 50S assembly. It makes multiple contacts with different domains of the 23S rRNA in the assembled 50S subunit and ribosome. Its function is as follows. Forms part of the polypeptide exit tunnel. This is Large ribosomal subunit protein uL4 from Prochlorococcus marinus (strain MIT 9515).